The following is a 273-amino-acid chain: Type III pantothenate kinase (273 aa).

Residue 7-14 (DVGNTAIK) participates in ATP binding. Substrate-binding positions include F119 and 124 to 127 (GIDR). Catalysis depends on D126, which acts as the Proton acceptor. D146 is a binding site for K(+). Residue T149 coordinates ATP. Residue T206 participates in substrate binding.

This sequence belongs to the type III pantothenate kinase family. In terms of assembly, homodimer. The cofactor is NH4(+). K(+) is required as a cofactor.

Its subcellular location is the cytoplasm. It carries out the reaction (R)-pantothenate + ATP = (R)-4'-phosphopantothenate + ADP + H(+). Its pathway is cofactor biosynthesis; coenzyme A biosynthesis; CoA from (R)-pantothenate: step 1/5. In terms of biological role, catalyzes the phosphorylation of pantothenate (Pan), the first step in CoA biosynthesis. This Rhodopirellula baltica (strain DSM 10527 / NCIMB 13988 / SH1) protein is Type III pantothenate kinase.